Reading from the N-terminus, the 249-residue chain is 3-deoxy-manno-octulosonate cytidylyltransferase (249 aa).

It belongs to the KdsB family.

It is found in the cytoplasm. The catalysed reaction is 3-deoxy-alpha-D-manno-oct-2-ulosonate + CTP = CMP-3-deoxy-beta-D-manno-octulosonate + diphosphate. Its pathway is nucleotide-sugar biosynthesis; CMP-3-deoxy-D-manno-octulosonate biosynthesis; CMP-3-deoxy-D-manno-octulosonate from 3-deoxy-D-manno-octulosonate and CTP: step 1/1. It participates in bacterial outer membrane biogenesis; lipopolysaccharide biosynthesis. Activates KDO (a required 8-carbon sugar) for incorporation into bacterial lipopolysaccharide in Gram-negative bacteria. The sequence is that of 3-deoxy-manno-octulosonate cytidylyltransferase from Coxiella burnetii (strain RSA 331 / Henzerling II).